The following is a 201-amino-acid chain: MAARTAFGAVCRRLWQGLGNFSVNTSKGNTAKNGGLLLSTNMKWVQFSNLHVDVPKDLTKPVVTISDEPDILYKRLSVLVKGHDKAVLDSYEYFAVLAAKELGISIKVHEPPRKIERFTLLQSVHIYKKHRVQYEMRTLYRCLELEHLTGSTADVYLEYIQRNLPEGVAMEVTKTQLEQLPEHIKEPIWETLSEEKEESKS.

This sequence belongs to the universal ribosomal protein uS10 family. As to quaternary structure, component of the mitochondrial small ribosomal subunit (mt-SSU). Mature mammalian 55S mitochondrial ribosomes consist of a small (28S) and a large (39S) subunit. The 28S small subunit contains a 12S ribosomal RNA (12S mt-rRNA) and 30 different proteins. The 39S large subunit contains a 16S rRNA (16S mt-rRNA), a copy of mitochondrial valine transfer RNA (mt-tRNA(Val)), which plays an integral structural role, and 52 different proteins.

The protein resides in the mitochondrion. The sequence is that of Small ribosomal subunit protein uS10m (MRPS10) from Homo sapiens (Human).